A 731-amino-acid chain; its full sequence is 1,4-alpha-glucan branching enzyme GlgB (731 aa).

The Nucleophile role is filled by Asp-412. Catalysis depends on Glu-465, which acts as the Proton donor.

It belongs to the glycosyl hydrolase 13 family. GlgB subfamily. As to quaternary structure, monomer.

The catalysed reaction is Transfers a segment of a (1-&gt;4)-alpha-D-glucan chain to a primary hydroxy group in a similar glucan chain.. The protein operates within glycan biosynthesis; glycogen biosynthesis. Catalyzes the formation of the alpha-1,6-glucosidic linkages in glycogen by scission of a 1,4-alpha-linked oligosaccharide from growing alpha-1,4-glucan chains and the subsequent attachment of the oligosaccharide to the alpha-1,6 position. This chain is 1,4-alpha-glucan branching enzyme GlgB, found in Bordetella bronchiseptica (strain ATCC BAA-588 / NCTC 13252 / RB50) (Alcaligenes bronchisepticus).